The following is a 316-amino-acid chain: Replication initiation protein (316 aa).

This sequence belongs to the initiator RepB protein family.

The polypeptide is Replication initiation protein (repA) (Escherichia coli).